The sequence spans 390 residues: 4-hydroxy-3-methylbut-2-en-1-yl diphosphate synthase (flavodoxin) (390 aa).

Residues Cys-281, Cys-284, Cys-316, and Glu-323 each contribute to the [4Fe-4S] cluster site.

This sequence belongs to the IspG family. The cofactor is [4Fe-4S] cluster.

It carries out the reaction (2E)-4-hydroxy-3-methylbut-2-enyl diphosphate + oxidized [flavodoxin] + H2O + 2 H(+) = 2-C-methyl-D-erythritol 2,4-cyclic diphosphate + reduced [flavodoxin]. It participates in isoprenoid biosynthesis; isopentenyl diphosphate biosynthesis via DXP pathway; isopentenyl diphosphate from 1-deoxy-D-xylulose 5-phosphate: step 5/6. In terms of biological role, converts 2C-methyl-D-erythritol 2,4-cyclodiphosphate (ME-2,4cPP) into 1-hydroxy-2-methyl-2-(E)-butenyl 4-diphosphate. This chain is 4-hydroxy-3-methylbut-2-en-1-yl diphosphate synthase (flavodoxin), found in Salinispora arenicola (strain CNS-205).